A 167-amino-acid polypeptide reads, in one-letter code: Large ribosomal subunit protein uL10 (167 aa).

The protein belongs to the universal ribosomal protein uL10 family. Part of the ribosomal stalk of the 50S ribosomal subunit. The N-terminus interacts with L11 and the large rRNA to form the base of the stalk. The C-terminus forms an elongated spine to which L12 dimers bind in a sequential fashion forming a multimeric L10(L12)X complex.

Its function is as follows. Forms part of the ribosomal stalk, playing a central role in the interaction of the ribosome with GTP-bound translation factors. In Dichelobacter nodosus (strain VCS1703A), this protein is Large ribosomal subunit protein uL10.